We begin with the raw amino-acid sequence, 364 residues long: Protein LATERAL BRANCHING OXIDOREDUCTASE 1 (364 aa).

Positions 203–312 (RFEEMFGEAV…RLTIVTFYAP (110 aa)) constitute a Fe2OG dioxygenase domain. The Fe cation site is built by His-235, Asp-237, and His-293. Arg-303 contributes to the 2-oxoglutarate binding site.

It belongs to the iron/ascorbate-dependent oxidoreductase family. As to quaternary structure, monomer. Fe(2+) serves as cofactor. The cofactor is L-ascorbate. Expressed in the vasculature throughout the plant and in the buds and root tips.

It localises to the cytoplasm. The enzyme catalyses (11R)-methyl carlactonoate + 2-oxoglutarate + O2 = (11R)-hydroxymethyl carlactonoate + succinate + CO2. Its function is as follows. Oxoglutarate-dependent dioxygenase involved in the biosynthesis of strigolactone natural products, bioactive compounds promoting plant fitness and soil microbe interactions, but preventing shoot branching. Catalyzes the hydroxylation of (11R)-methyl carlactonoate (MeCLA) to produce (11R)-hydroxymethyl carlactonoate (1'-HO-MeCLA) in final stages of strigolactone biosynthesis, downstream of MAX1 and CLAMT. The protein is Protein LATERAL BRANCHING OXIDOREDUCTASE 1 of Arabidopsis thaliana (Mouse-ear cress).